The following is a 282-amino-acid chain: Shikimate dehydrogenase (NADP(+)) (282 aa).

Residues 18 to 20 and Thr-65 each bind shikimate; that span reads SRS. Lys-69 serves as the catalytic Proton acceptor. Residues Asn-90 and Asp-106 each contribute to the shikimate site. NADP(+)-binding positions include 134–138, 158–163, and Ile-223; these read GAGGA and NRTAAR. Shikimate is bound at residue Tyr-225. Gly-246 is an NADP(+) binding site.

This sequence belongs to the shikimate dehydrogenase family. Homodimer.

The enzyme catalyses shikimate + NADP(+) = 3-dehydroshikimate + NADPH + H(+). It participates in metabolic intermediate biosynthesis; chorismate biosynthesis; chorismate from D-erythrose 4-phosphate and phosphoenolpyruvate: step 4/7. In terms of biological role, involved in the biosynthesis of the chorismate, which leads to the biosynthesis of aromatic amino acids. Catalyzes the reversible NADPH linked reduction of 3-dehydroshikimate (DHSA) to yield shikimate (SA). This is Shikimate dehydrogenase (NADP(+)) from Methylobacterium radiotolerans (strain ATCC 27329 / DSM 1819 / JCM 2831 / NBRC 15690 / NCIMB 10815 / 0-1).